The sequence spans 218 residues: Ras-related protein Rab-11B (218 aa).

Position 2 is an N-acetylglycine (glycine 2). A Citrulline modification is found at arginine 4. Serine 20, glycine 21, glycine 23, lysine 24, serine 25, asparagine 26, asparagine 37, leucine 38, serine 40, serine 42, and threonine 43 together coordinate GTP. Residue serine 25 participates in Mg(2+) binding. Positions 36–47 (FNLESKSTIGVE) match the Switch 1 motif. The Mg(2+) site is built by threonine 43 and aspartate 66. The Switch 2 motif lies at 67–86 (TAGQERYRAITSAYYRGAVG). Glycine 69, asparagine 124, lysine 125, aspartate 127, alanine 155, and leucine 156 together coordinate GTP. The tract at residues 184-218 (RAAHDESPGNNVVDISVPPTTDGQKPNKLQCCQNL) is disordered. S-geranylgeranyl cysteine attachment occurs at residues cysteine 214 and cysteine 215. Cysteine methyl ester is present on cysteine 215. Residues 216 to 218 (QNL) constitute a propeptide, removed in mature form.

Belongs to the small GTPase superfamily. Rab family. As to quaternary structure, interacts with KCNMA1. Interacts with RAB11FIP1, RAB11FIP2, RAB11FIP3 and RAB11FIP4. May interact with TBC1D14. Interacts with ATP6V1E1. Interacts with PI4KB. Interacts (GDP-bound form) with ZFYVE27. Interacts (GDP-bound form) with KIF5A in a ZFYVE27-dependent manner. Interacts with RELCH. Interacts (in GTP-bound form) with TBC1D8B (via domain Rab-GAP TBC). Forms a complex containing RAB11B, ASAP1, Rabin8/RAB3IP, RAP11FIP3 and ARF4. Interacts with WDR44. The cofactor is Mg(2+). In terms of processing, citrullinated by PADI4. Post-translationally, (Microbial infection) Glycosylated on arginine residues by S.typhimurium protein Ssek3.

It is found in the recycling endosome membrane. The protein resides in the cytoplasmic vesicle. Its subcellular location is the secretory vesicle. The protein localises to the synaptic vesicle membrane. It localises to the phagosome membrane. It catalyses the reaction GTP + H2O = GDP + phosphate + H(+). With respect to regulation, regulated by guanine nucleotide exchange factors (GEFs) which promote the exchange of bound GDP for free GTP. Regulated by GTPase activating proteins (GAPs) which increase the GTP hydrolysis activity. Inhibited by GDP dissociation inhibitors (GDIs) which prevent Rab-GDP dissociation. Functionally, the small GTPases Rab are key regulators of intracellular membrane trafficking, from the formation of transport vesicles to their fusion with membranes. Rabs cycle between an inactive GDP-bound form and an active GTP-bound form that is able to recruit to membranes different set of downstream effectors directly responsible for vesicle formation, movement, tethering and fusion. The small Rab GTPase RAB11B plays a role in endocytic recycling, regulating apical recycling of several transmembrane proteins including cystic fibrosis transmembrane conductance regulator/CFTR, epithelial sodium channel/ENaC, potassium voltage-gated channel, and voltage-dependent L-type calcium channel. May also regulate constitutive and regulated secretion, like insulin granule exocytosis. Required for melanosome transport and release from melanocytes. Also regulates V-ATPase intracellular transport in response to extracellular acidosis. Promotes Rabin8/RAB3IP preciliary vesicular trafficking to mother centriole by forming a ciliary targeting complex containing Rab11, ASAP1, Rabin8/RAB3IP, RAB11FIP3 and ARF4, thereby regulating ciliogenesis initiation. On the contrary, upon LPAR1 receptor signaling pathway activation, interaction with phosphorylated WDR44 prevents Rab11-RAB3IP-RAB11FIP3 complex formation and cilia growth. This chain is Ras-related protein Rab-11B, found in Homo sapiens (Human).